A 620-amino-acid polypeptide reads, in one-letter code: Membralin (620 aa).

The interval 1–33 (MSEHVEPAAPGPGPNGGGGGPAPARGPRTPNLN) is disordered. Residue Ser2 is modified to N-acetylserine. Over residues 22-31 (APARGPRTPN) the composition is skewed to low complexity. Thr29 is subject to Phosphothreonine. Residues 70-90 (FFVLLKALFVLFVLAYIHIVF) form a helical membrane-spanning segment. Asn189 carries an N-linked (GlcNAc...) asparagine glycan. 3 helical membrane passes run 302 to 322 (TSYL…SMLL), 346 to 366 (IAFP…MEAI), and 426 to 446 (YSSL…IYFF). Disordered stretches follow at residues 474-517 (TPTA…GPVA) and 568-620 (SPLG…EVGS). 2 stretches are compositionally biased toward low complexity: residues 499–517 (PPAL…GPVA) and 568–593 (SPLG…AASD).

The protein belongs to the membralin family. In terms of assembly, interacts with ERLIN2.

It is found in the endoplasmic reticulum membrane. Its function is as follows. May have a role in the ERAD pathway required for clearance of misfolded proteins in the endoplasmic reticulum (ER). Promotes survival of motor neurons, probably by protecting against ER stress. The chain is Membralin (TMEM259) from Homo sapiens (Human).